The sequence spans 255 residues: Putative OPA3-like protein CG13603 (255 aa).

The stretch at 108-154 (KENKKNELAQSEKMELTNMLTEMNFRLERQDAQIREMTRVLADLDSR) forms a coiled coil. The disordered stretch occupies residues 168–187 (VPFDPDTPDQSASARNPKKF). Residues 212 to 241 (DGRNRKAKEALQHLDEVAVQLEQSLGEAAT) are a coiled coil.

Belongs to the OPA3 family.

In Drosophila melanogaster (Fruit fly), this protein is Putative OPA3-like protein CG13603.